Here is a 221-residue protein sequence, read N- to C-terminus: Secreted protein BARF1 (221 aa).

The signal sequence occupies residues 1-20 (MARFIAQLLLLASCVAAGQA). Ig-like domains lie at 21–120 (VTAF…EHLS) and 124–220 (PLTL…GYLS). Asn95 is a glycosylation site (N-linked (GlcNAc...) asparagine; by host). A disulfide bridge links Cys146 with Cys201.

In terms of assembly, homohexamer. Interacts with human CSF1. Phosphorylated on serine and threonine by host.

It localises to the secreted. Functionally, plays diverse functions in immunomodulation and oncogenicity, maybe by acting as a functional receptor for human CSF1. May inhibit interferon secretion from mononuclear cells. Exhibits oncogenic activity in vitro. This is Secreted protein BARF1 from Epstein-Barr virus (strain B95-8) (HHV-4).